A 917-amino-acid polypeptide reads, in one-letter code: MGVEKRINDEEMQPLAERDDKSRDSIDSTSTASISLALLGGANGSAHGSRAARTRKSENQEKYHDDEEEGDLEEGFVPPAGGWSAPRKVSVIFTLIVTLCIAGWLVAFFVLLGRHKDSSKDAAVSQGESNIIPGIYSGGRGGKKLDLDGVLFGNWSPKSHDISWFPGPNGADGLLLEQGGDRNKAYLRVEDIRSRNPGNKADDTIVLMRESSFMVGKRLVRPSKVWPSPDLKTVLVMSDQRKNWRHSYTGNYWIFDVETQTGEPLDPESLDGGIQLASWSPNSDAIVFTRKNNMFIRRLPSKNVKQITTDGGTNLFYGIPDWVYEEEVFSDSSATWWDGDGKFVAFLRTNESRVPEYPVQYFIPNTNKPSRPSEENYPDIRKIKYPKAGAPNPVVNIQFFDVEKEEVFSVDVKDDLPDDDRLVIGVTWASNGNVLVRETNRESDRLSVVLIDAAKRAGKVVRSRNFSSLDGGWVEPSQTTHFVPADPKNGRPHDGYIETIPHDGFEHLAYFTPMDNSEPTVLTSGDWEVVDAPSAVDLKRGLVYFVAAKENPTERHIYTVKLDGSDLQPIVDTKSAGYYSISLSAGAGYALLKYEGPDIPWQKVISTPANEEKYEESIEKNPGLADMARKYALPSLHYQTITISGYELQVVERRPANFNPDKKYPVLFHLYGGPGSQTVTKKFKVDFQSYVASNLGYIVVTVDGRGTGFIGRKARCAVRGNLGHYEAIDQIETAKAWGKRSYVDAGRMAIWGWSYGGFMTLKTLEQDAGQTFQYGMAVAPVTDWRFYDSIYTERYMHTPQNNPEGYDRSAISNVTALDQAVRFMIVHGSGDDNVHIQNTLTLLDKLDLGSVKNFDVHVYPDSDHSIYFHNANKMVYQRLSDWLVNAFNGEWVKTRDPIPHKSLARRALGLINILRNG.

Positions 1–78 (MGVEKRINDE…EGDLEEGFVP (78 aa)) are disordered. Over 1–90 (MGVEKRINDE…GGWSAPRKVS (90 aa)) the chain is Cytoplasmic. Residues 16 to 26 (AERDDKSRDSI) are compositionally biased toward basic and acidic residues. Residues 27–49 (DSTSTASISLALLGGANGSAHGS) are compositionally biased toward low complexity. The segment covering 55-65 (RKSENQEKYHD) has biased composition (basic and acidic residues). Residues 91-111 (VIFTLIVTLCIAGWLVAFFVL) traverse the membrane as a helical; Signal-anchor for type II membrane protein segment. At 112-917 (LGRHKDSSKD…LGLINILRNG (806 aa)) the chain is on the vacuolar side. Residues N350 and N465 are each glycosylated (N-linked (GlcNAc...) asparagine). S754 functions as the Charge relay system in the catalytic mechanism. N-linked (GlcNAc...) asparagine glycosylation is present at N813. Catalysis depends on charge relay system residues D831 and H864.

The protein belongs to the peptidase S9B family.

The protein resides in the vacuole membrane. The catalysed reaction is Release of an N-terminal dipeptide, Xaa-Yaa-|-Zaa-, from a polypeptide, preferentially when Yaa is Pro, provided Zaa is neither Pro nor hydroxyproline.. Functionally, type IV dipeptidyl-peptidase which removes N-terminal dipeptides sequentially from polypeptides having unsubstituted N-termini provided that the penultimate residue is proline. The chain is Probable dipeptidyl-aminopeptidase B (DAPB) from Coccidioides posadasii (strain C735) (Valley fever fungus).